The primary structure comprises 520 residues: GMP synthase [glutamine-hydrolyzing] (520 aa).

In terms of domain architecture, Glutamine amidotransferase type-1 spans 9–202 (TVLIVDFGSQ…VHNIAGIEGD (194 aa)). The active-site Nucleophile is the Cys86. Residues His176 and Glu178 contribute to the active site. Positions 203–395 (WTMRAYREHA…LGLPESFIGR (193 aa)) constitute a GMPS ATP-PPase domain. 230–236 (SGGVDSS) contacts ATP.

In terms of assembly, homodimer.

The enzyme catalyses XMP + L-glutamine + ATP + H2O = GMP + L-glutamate + AMP + diphosphate + 2 H(+). Its pathway is purine metabolism; GMP biosynthesis; GMP from XMP (L-Gln route): step 1/1. In terms of biological role, catalyzes the synthesis of GMP from XMP. This chain is GMP synthase [glutamine-hydrolyzing], found in Mesorhizobium japonicum (strain LMG 29417 / CECT 9101 / MAFF 303099) (Mesorhizobium loti (strain MAFF 303099)).